The sequence spans 37 residues: Omega-agatoxin-Aa3d (37 aa).

Belongs to the neurotoxin 04 (omega-agtx) family. 03 (type II/III omega-agtx) subfamily. Disulfide bonds are present. As to expression, expressed by the venom gland.

The protein resides in the secreted. Omega-agatoxins are antagonists of voltage-gated calcium channels. This toxin blocks calcium channels in insect central neurons but not at peripheral neuromuscular junctions. In vertebrates, it is broadly active against all high-threshold Cav1/CACNA1 channels and Cav2.2/CACNA1B channels. This is Omega-agatoxin-Aa3d from Agelenopsis aperta (North American funnel-web spider).